Here is a 482-residue protein sequence, read N- to C-terminus: G patch domain-containing protein 2-like (482 aa).

Ser31, Ser86, and Ser88 each carry phosphoserine. Thr91 is modified (phosphothreonine). Residue Lys196 forms a Glycyl lysine isopeptide (Lys-Gly) (interchain with G-Cter in SUMO2) linkage. Over residues 198-214 (GRKERMECETDEQKQGS) the composition is skewed to basic and acidic residues. 2 disordered regions span residues 198-247 (GRKE…DDEQ) and 413-482 (KRKR…PGYS). Over residues 220–230 (ECETSSVCSSS) the composition is skewed to low complexity. Residues 439–450 (TPASQAPKSPSS) are compositionally biased toward polar residues. 2 positions are modified to phosphoserine: Ser447 and Ser449. Residues 456-469 (TSAAEKATDATTAT) are compositionally biased toward low complexity.

The chain is G patch domain-containing protein 2-like (GPATCH2L) from Homo sapiens (Human).